A 489-amino-acid chain; its full sequence is N-succinylglutamate 5-semialdehyde dehydrogenase (489 aa).

223-228 (GSSNTG) is an NAD(+) binding site. Catalysis depends on residues Glu246 and Cys280.

Belongs to the aldehyde dehydrogenase family. AstD subfamily.

The enzyme catalyses N-succinyl-L-glutamate 5-semialdehyde + NAD(+) + H2O = N-succinyl-L-glutamate + NADH + 2 H(+). Its pathway is amino-acid degradation; L-arginine degradation via AST pathway; L-glutamate and succinate from L-arginine: step 4/5. Catalyzes the NAD-dependent reduction of succinylglutamate semialdehyde into succinylglutamate. The sequence is that of N-succinylglutamate 5-semialdehyde dehydrogenase from Idiomarina loihiensis (strain ATCC BAA-735 / DSM 15497 / L2-TR).